The primary structure comprises 224 residues: MENLKIIWHGHACFSLIGKKHVLVDPFLTDNPVAKVKPEELKPDLILVTHGHSDHCEDASKISKNTHAPVVAAFELSEILKEEGTETIDINPGGTIEYEGIRVKATIATHSSSYNGRYAGNPMGFVIDMGRKIYHAGDTGYFKDMEAIGAMDRPDIALLPIGGHYTMDVDGAFEAVKAIKPAIAIPMHYNTFDLIRADPERFKALAGTVGTYVIIPEIEKPIEI.

This sequence belongs to the UPF0173 family.

The polypeptide is UPF0173 metal-dependent hydrolase Ta0764 (Thermoplasma acidophilum (strain ATCC 25905 / DSM 1728 / JCM 9062 / NBRC 15155 / AMRC-C165)).